Consider the following 408-residue polypeptide: UDP-N-acetylglucosamine--dolichyl-phosphate N-acetylglucosaminephosphotransferase (408 aa).

Residues Met1 to Pro10 lie on the Lumenal side of the membrane. A helical membrane pass occupies residues Leu11–Ala38. The Cytoplasmic portion of the chain corresponds to Ala39–Gln58. UDP-N-acetyl-alpha-D-glucosamine-binding positions include Gln44–Leu46 and Glu56. A helical transmembrane segment spans residues Gly59–Phe78. Residues Leu79 to Pro91 lie on the Lumenal side of the membrane. Residues His92–Leu118 traverse the membrane as a helical segment. The Cytoplasmic portion of the chain corresponds to Asn119–Arg121. The helical transmembrane segment at Trp122–Asn143 threads the bilayer. A dolichyl phosphate-binding site is contributed by Lys125. The Lumenal segment spans residues Phe144–Gly166. Asn146 carries N-linked (GlcNAc...) asparagine glycosylation. A helical membrane pass occupies residues Ile167–Ile186. A dolichyl phosphate-binding site is contributed by Val178–Ile186. Asn185 serves as a coordination point for Mg(2+). Over Leu187–Gly192 the chain is Cytoplasmic. Asn191 is a UDP-N-acetyl-alpha-D-glucosamine binding site. Residues Leu193–Leu213 traverse the membrane as a helical segment. Residues Glu214–Arg218 are Lumenal-facing. A helical membrane pass occupies residues Asp219–Asn242. Over Trp243–Val250 the chain is Cytoplasmic. Residues Gly251 to Gly269 traverse the membrane as a helical segment. Asp252 contributes to the Mg(2+) binding site. At His270 to Phe271 the chain is on the lumenal side. Residues Ser272–Leu293 traverse the membrane as a helical segment. The Cytoplasmic portion of the chain corresponds to Leu294 to His375. Arg301 to Arg303 serves as a coordination point for UDP-N-acetyl-alpha-D-glucosamine. The chain crosses the membrane as a helical span at residues Glu376–Gln400. Over Leu401 to Val408 the chain is Lumenal.

This sequence belongs to the glycosyltransferase 4 family. In terms of assembly, homodimer. Mg(2+) serves as cofactor.

The protein localises to the endoplasmic reticulum membrane. It carries out the reaction a di-trans,poly-cis-dolichyl phosphate + UDP-N-acetyl-alpha-D-glucosamine = an N-acetyl-alpha-D-glucosaminyl-diphospho-di-trans,poly-cis-dolichol + UMP. The protein operates within protein modification; protein glycosylation. With respect to regulation, inhibited by natural nucleoside antibiotic tunicamycin, which acts as a structural analog and competitor of UDP-GlcNAc. In terms of biological role, UDP-N-acetylglucosamine--dolichyl-phosphate N-acetylglucosaminephosphotransferase that operates in the biosynthetic pathway of dolichol-linked oligosaccharides, the glycan precursors employed in protein asparagine (N)-glycosylation. The assembly of dolichol-linked oligosaccharides begins on the cytosolic side of the endoplasmic reticulum membrane and finishes in its lumen. The sequential addition of sugars to dolichol pyrophosphate produces dolichol-linked oligosaccharides containing fourteen sugars, including two GlcNAcs, nine mannoses and three glucoses. Once assembled, the oligosaccharide is transferred from the lipid to nascent proteins by oligosaccharyltransferases. Catalyzes the initial step of dolichol-linked oligosaccharide biosynthesis, transfering GlcNAc-1-P from cytosolic UDP-GlcNAc onto the carrier lipid dolichyl phosphate (P-dolichol), yielding GlcNAc-P-P-dolichol embedded in the cytoplasmic leaflet of the endoplasmic reticulum membrane. This is UDP-N-acetylglucosamine--dolichyl-phosphate N-acetylglucosaminephosphotransferase (DPAGT1) from Cricetulus griseus (Chinese hamster).